The following is a 327-amino-acid chain: GTPase Obg (327 aa).

The region spanning 2–160 is the Obg domain; the sequence is HILKDSLSIT…LNLRLELSLI (159 aa). The 166-residue stretch at 161–326 folds into the OBG-type G domain; it reads ADIGLVGFPN…LVSELFALSR (166 aa). GTP is bound by residues 167–174, 192–196, 213–216, 280–283, and 307–309; these read GFPNAGKS, FTTRF, DVPG, NKLD, and SIY. The Mg(2+) site is built by Ser-174 and Thr-194.

Belongs to the TRAFAC class OBG-HflX-like GTPase superfamily. OBG GTPase family. In terms of assembly, monomer. Requires Mg(2+) as cofactor.

It is found in the cytoplasm. Functionally, an essential GTPase which binds GTP, GDP and possibly (p)ppGpp with moderate affinity, with high nucleotide exchange rates and a fairly low GTP hydrolysis rate. Plays a role in control of the cell cycle, stress response, ribosome biogenesis and in those bacteria that undergo differentiation, in morphogenesis control. The sequence is that of GTPase Obg from Borrelia hermsii (strain HS1 / DAH).